Consider the following 191-residue polypeptide: Protein hugin (191 aa).

The first 24 residues, 1–24 (MCGPSYCTLLLIAASCYILVCSHA), serve as a signal peptide directing secretion. Residues 25–119 (KSLQGTSKLD…LTYYLLLQKL (95 aa)) constitute a propeptide that is removed on maturation. Leucine amide occurs at positions 137 and 181. A propeptide spanning residues 185 to 191 (AQVCGGD) is cleaved from the precursor.

This sequence belongs to the pyrokinin family. As to expression, expressed in a subgroup of neurosecretory cells in the subesophageal ganglion from embryonic stage 9 to larval stages.

The protein localises to the secreted. Probably has a role in larval molting. The polypeptide is Protein hugin (Hug) (Drosophila melanogaster (Fruit fly)).